The sequence spans 530 residues: MHQRILILDYGSQVTQLIARRVREAGVYSEIHPGDVDDAFIREQAAQGLKGVILSGSHASAYEEGSMRVPAAVFELGLPVLGICYGMQAMALQLGGKVSFSDHREFGYAEIVAQGGTKLLSGLADFQNDAGQDVLKVWMSHGDKVTELPPGFSLMASTPSCPIAAMADESRGYYAVQFHPEVTHTVQGKALFSRFVREICGCEGDWNMPDYISEAVARIREQVGNDEVILGLSGGVDSSVAAALIHRAIGDQLTCVFVDHGLLRLNEGLQVMQTFSENMGVKIIHVDATEQFMGKLAGVADPEAKRKIIGREFVEVFQTEAGKLQGAKWLAQGTIYPDVIESAGAKTGKAAAIKSHHNVGGLPETLNLQLLEPLRELFKDEVRELGVALGLPPQMVYRHPFPGPGLGVRILGEVKHEYAELLRRADAIFIEELRNTKDPASDLSWYDLTSQAFAVFLPVKSVGVMGDGRTYEYVVALRAVQTFDFMTADWAPLPHPLLAKVSSRIINEVRGINRVVYDVSSKPPATIEWE.

The Glutamine amidotransferase type-1 domain occupies 4–205; the sequence is RILILDYGSQ…VREICGCEGD (202 aa). Residue cysteine 84 is the Nucleophile of the active site. Catalysis depends on residues histidine 179 and glutamate 181. The region spanning 206–398 is the GMPS ATP-PPase domain; the sequence is WNMPDYISEA…LGLPPQMVYR (193 aa). ATP is bound at residue 233 to 239; sequence SGGVDSS.

As to quaternary structure, homodimer.

The enzyme catalyses XMP + L-glutamine + ATP + H2O = GMP + L-glutamate + AMP + diphosphate + 2 H(+). Its pathway is purine metabolism; GMP biosynthesis; GMP from XMP (L-Gln route): step 1/1. In terms of biological role, catalyzes the synthesis of GMP from XMP. This chain is GMP synthase [glutamine-hydrolyzing], found in Bordetella avium (strain 197N).